We begin with the raw amino-acid sequence, 441 residues long: Trigger factor (441 aa).

The PPIase FKBP-type domain maps to 161–246; the sequence is GDKVTIDFLG…VHEVLGEKLP (86 aa).

It belongs to the FKBP-type PPIase family. Tig subfamily.

The protein resides in the cytoplasm. It carries out the reaction [protein]-peptidylproline (omega=180) = [protein]-peptidylproline (omega=0). Its function is as follows. Involved in protein export. Acts as a chaperone by maintaining the newly synthesized protein in an open conformation. Functions as a peptidyl-prolyl cis-trans isomerase. The polypeptide is Trigger factor (Teredinibacter turnerae (strain ATCC 39867 / T7901)).